The primary structure comprises 262 residues: Putative hydroxypyruvate isomerase (262 aa).

Catalysis depends on proton donor/acceptor residues Glu146 and Glu244.

It belongs to the hyi family.

It carries out the reaction 3-hydroxypyruvate = 2-hydroxy-3-oxopropanoate. Its function is as follows. Catalyzes the reversible isomerization between hydroxypyruvate and 2-hydroxy-3-oxopropanoate (also termed tartronate semialdehyde). The polypeptide is Putative hydroxypyruvate isomerase (Caenorhabditis elegans).